The chain runs to 563 residues: Nicalin (563 aa).

Residues 1–29 (MQDEIIDFFRSPALLFYMTLMLTICVVNG) form the signal peptide. The Lumenal portion of the chain corresponds to 30–522 (SQQVGEVVET…NRLVAERVKP (493 aa)). Asparagine 232 is a glycosylation site (N-linked (GlcNAc...) asparagine). A helical transmembrane segment spans residues 523–543 (AVFELVIAAGVFTYLSAFYYI). Residues 544 to 563 (ATHSQNTIEGTVAAIRKSIF) are Cytoplasmic-facing.

This sequence belongs to the nicastrin family. In terms of assembly, may interact with the levamisole-sensitive nicotinic acetylcholine receptor (L-AChR). May interact with nra-4 in the ER. As to expression, expressed in body wall, pharyngeal, and vulval muscles, excretory canal cell, head and motor neurons, and vulval epithelium.

The protein localises to the endoplasmic reticulum membrane. Functionally, involved in the recognition and selection of protein complexes to exit the endoplasmic reticulum (ER). In muscles, regulates levamisole-sensitive nicotinic acetylcholine receptor (L-AChR) subunit composition, possibly by allowing only specific L-AChR subunit combinations to exit the ER. Specifically, may promote the inclusion of alpha subunits unc-38 and unc-29 into L-AChR. Regulates L-AChR sensitivity to agonists such as nicotine and levamisole at neuro-muscular junctions. In touch neurons, may prevent ER exit of incorrectly folded mec-4-mec-10 ion channel. This Caenorhabditis elegans protein is Nicalin.